A 310-amino-acid polypeptide reads, in one-letter code: Malate dehydrogenase (310 aa).

Residues 7-12 (GAGNVG) and D32 contribute to the NAD(+) site. Residues R81 and R87 each contribute to the substrate site. Residues N94 and 117 to 119 (VSN) each bind NAD(+). Residues N119 and R150 each coordinate substrate. H174 functions as the Proton acceptor in the catalytic mechanism.

The protein belongs to the LDH/MDH superfamily. MDH type 3 family. Homotetramer; arranged as a dimer of dimers.

It catalyses the reaction (S)-malate + NAD(+) = oxaloacetate + NADH + H(+). Functionally, catalyzes the reversible oxidation of malate to oxaloacetate. The polypeptide is Malate dehydrogenase (Chlorobaculum parvum (strain DSM 263 / NCIMB 8327) (Chlorobium vibrioforme subsp. thiosulfatophilum)).